Consider the following 30-residue polypeptide: V-type proton ATPase catalytic subunit A isoform 1 (30 aa).

The protein belongs to the ATPase alpha/beta chains family. In terms of assembly, V-ATPase is a heteromultimeric enzyme composed of a peripheral catalytic V1 complex (main components: subunits A, B, C, D, E, and F) attached to an integral membrane V0 proton pore complex (main component: the proteolipid protein).

The enzyme catalyses ATP + H2O + 4 H(+)(in) = ADP + phosphate + 5 H(+)(out). Functionally, catalytic subunit of the peripheral V1 complex of vacuolar ATPase. V-ATPase vacuolar ATPase is responsible for acidifying a variety of intracellular compartments in eukaryotic cells. The sequence is that of V-type proton ATPase catalytic subunit A isoform 1 from Equisetum arvense (Field horsetail).